The sequence spans 1019 residues: Probable inorganic carbon transporter subunit DabA 1 (1019 aa).

The Zn(2+) site is built by C491 and D493. The disordered stretch occupies residues 624 to 643 (VPTRLHSPRDEGSAAGGEGQ). Zn(2+) is bound by residues H676 and C691.

Belongs to the inorganic carbon transporter (TC 9.A.2) DabA family. As to quaternary structure, forms a complex with DabB. Zn(2+) is required as a cofactor.

The protein resides in the cell inner membrane. Its function is as follows. Part of an energy-coupled inorganic carbon pump. In Sorangium cellulosum (strain So ce56) (Polyangium cellulosum (strain So ce56)), this protein is Probable inorganic carbon transporter subunit DabA 1.